Reading from the N-terminus, the 276-residue chain is NAD kinase (276 aa).

Aspartate 61 serves as the catalytic Proton acceptor. Residues 61–62 (DG), arginine 66, 135–136 (NE), arginine 146, histidine 163, aspartate 165, and alanine 200 each bind NAD(+).

This sequence belongs to the NAD kinase family. It depends on a divalent metal cation as a cofactor.

It localises to the cytoplasm. The catalysed reaction is NAD(+) + ATP = ADP + NADP(+) + H(+). Its function is as follows. Involved in the regulation of the intracellular balance of NAD and NADP, and is a key enzyme in the biosynthesis of NADP. Catalyzes specifically the phosphorylation on 2'-hydroxyl of the adenosine moiety of NAD to yield NADP. In Chloroflexus aurantiacus (strain ATCC 29366 / DSM 635 / J-10-fl), this protein is NAD kinase.